The chain runs to 252 residues: tRNA (guanine-N(1)-)-methyltransferase (252 aa).

Residues Gly-113 and 133–138 (IGDYVL) contribute to the S-adenosyl-L-methionine site.

The protein belongs to the RNA methyltransferase TrmD family. As to quaternary structure, homodimer.

It localises to the cytoplasm. The catalysed reaction is guanosine(37) in tRNA + S-adenosyl-L-methionine = N(1)-methylguanosine(37) in tRNA + S-adenosyl-L-homocysteine + H(+). In terms of biological role, specifically methylates guanosine-37 in various tRNAs. The chain is tRNA (guanine-N(1)-)-methyltransferase from Xanthomonas campestris pv. campestris (strain B100).